The chain runs to 602 residues: Proline--tRNA ligase (602 aa).

It belongs to the class-II aminoacyl-tRNA synthetase family. ProS type 1 subfamily. In terms of assembly, homodimer.

It localises to the cytoplasm. The enzyme catalyses tRNA(Pro) + L-proline + ATP = L-prolyl-tRNA(Pro) + AMP + diphosphate. In terms of biological role, catalyzes the attachment of proline to tRNA(Pro) in a two-step reaction: proline is first activated by ATP to form Pro-AMP and then transferred to the acceptor end of tRNA(Pro). As ProRS can inadvertently accommodate and process non-cognate amino acids such as alanine and cysteine, to avoid such errors it has two additional distinct editing activities against alanine. One activity is designated as 'pretransfer' editing and involves the tRNA(Pro)-independent hydrolysis of activated Ala-AMP. The other activity is designated 'posttransfer' editing and involves deacylation of mischarged Ala-tRNA(Pro). The misacylated Cys-tRNA(Pro) is not edited by ProRS. This is Proline--tRNA ligase from Thermosynechococcus vestitus (strain NIES-2133 / IAM M-273 / BP-1).